Here is a 764-residue protein sequence, read N- to C-terminus: FHF complex subunit HOOK interacting protein 2A (764 aa).

The segment at 190–236 is disordered; it reads SEDGPKGQDPGSGDVSQCQQPQELSGATGVEPTESEEEPPHQMDDLS. A compositionally biased stretch (polar residues) spans 203–214; the sequence is DVSQCQQPQELS.

This sequence belongs to the FHIP family.

In terms of biological role, may be required for proper functioning of the nervous system. This is FHF complex subunit HOOK interacting protein 2A from Mus musculus (Mouse).